The following is a 462-amino-acid chain: MKRYFIHTFGCQMNVNDSLRMSEVLSQMSYAPTPVPDNADLIILNTCSIREKAEDKMLSALGRYKPVKASRGALIGVGGCVAQQEKDKLLKKVPYLDFVFGPDNIARLPDIIGRVSAERERVVETAFVNSEEYVFPRADPETSRGKVTEFVTVMKGCDNVCSFCIVPHTRGREVSRAFPDVLVEVADLAKVGVREVTLIGQNVNSYAGGISFAQLLLRTAEVPGIERVRFTTSHPHDLSDELIEAFRVQPKITPHFHLPVQCGSDRILKMMRRDYTVVQYLERLAKLREARPGIAVTTDIIVGFPGETEEEFEMTMQLTEQVRYDNQFSFVYSPRPKTGAALREKDWGPVPHEVKIARLERLQKLQRRISGEITAALVGSEVEVMVEGHSRYDATKRFGRTPENRTVNFDGDAPAGSFVTVKVERATPNQLAGKQVALLKPPTVEPLPVPMAEAPFHVVAEA.

In terms of domain architecture, MTTase N-terminal spans 2 to 117 (KRYFIHTFGC…LPDIIGRVSA (116 aa)). The [4Fe-4S] cluster site is built by C11, C47, C80, C157, C161, and C164. The Radical SAM core domain maps to 143–372 (SRGKVTEFVT…QKLQRRISGE (230 aa)). Residues 375-437 (AALVGSEVEV…PNQLAGKQVA (63 aa)) enclose the TRAM domain.

Belongs to the methylthiotransferase family. MiaB subfamily. In terms of assembly, monomer. The cofactor is [4Fe-4S] cluster.

Its subcellular location is the cytoplasm. It carries out the reaction N(6)-dimethylallyladenosine(37) in tRNA + (sulfur carrier)-SH + AH2 + 2 S-adenosyl-L-methionine = 2-methylsulfanyl-N(6)-dimethylallyladenosine(37) in tRNA + (sulfur carrier)-H + 5'-deoxyadenosine + L-methionine + A + S-adenosyl-L-homocysteine + 2 H(+). Its function is as follows. Catalyzes the methylthiolation of N6-(dimethylallyl)adenosine (i(6)A), leading to the formation of 2-methylthio-N6-(dimethylallyl)adenosine (ms(2)i(6)A) at position 37 in tRNAs that read codons beginning with uridine. This chain is tRNA-2-methylthio-N(6)-dimethylallyladenosine synthase, found in Myxococcus xanthus (strain DK1622).